We begin with the raw amino-acid sequence, 1177 residues long: DNA-directed RNA polymerase subunit beta (1177 aa).

Residues 1–36 (MEGCILADSRQSKTAASPSPSRPQSSSNNSVPGAPN) are disordered. A compositionally biased stretch (low complexity) spans 17 to 32 (SPSPSRPQSSSNNSVP).

It belongs to the RNA polymerase beta chain family. As to quaternary structure, the RNAP catalytic core consists of 2 alpha, 1 beta, 1 beta' and 1 omega subunit. When a sigma factor is associated with the core the holoenzyme is formed, which can initiate transcription.

It catalyses the reaction RNA(n) + a ribonucleoside 5'-triphosphate = RNA(n+1) + diphosphate. Its function is as follows. DNA-dependent RNA polymerase catalyzes the transcription of DNA into RNA using the four ribonucleoside triphosphates as substrates. The chain is DNA-directed RNA polymerase subunit beta from Mycobacterium tuberculosis (strain ATCC 25177 / H37Ra).